The chain runs to 609 residues: UvrABC system protein C (609 aa).

One can recognise a GIY-YIG domain in the interval 13–91 (HQPGVYRMFD…IKAFQPRYNV (79 aa)). The UVR domain maps to 201–236 (QQVLEHLIKKMEQASMQLNFEQAAYFRDQIQAIRAV).

It belongs to the UvrC family. In terms of assembly, interacts with UvrB in an incision complex.

Its subcellular location is the cytoplasm. The UvrABC repair system catalyzes the recognition and processing of DNA lesions. UvrC both incises the 5' and 3' sides of the lesion. The N-terminal half is responsible for the 3' incision and the C-terminal half is responsible for the 5' incision. The sequence is that of UvrABC system protein C from Histophilus somni (strain 2336) (Haemophilus somnus).